We begin with the raw amino-acid sequence, 932 residues long: Isoleucine--tRNA ligase (932 aa).

The short motif at 57–67 (PYANGDIHIGT) is the 'HIGH' region element. Glu559 serves as a coordination point for L-isoleucyl-5'-AMP. Residues 600-604 (KMSKS) carry the 'KMSKS' region motif. Lys603 serves as a coordination point for ATP. Positions 899, 902, 919, and 922 each coordinate Zn(2+).

This sequence belongs to the class-I aminoacyl-tRNA synthetase family. IleS type 1 subfamily. Monomer. The cofactor is Zn(2+).

It localises to the cytoplasm. The catalysed reaction is tRNA(Ile) + L-isoleucine + ATP = L-isoleucyl-tRNA(Ile) + AMP + diphosphate. In terms of biological role, catalyzes the attachment of isoleucine to tRNA(Ile). As IleRS can inadvertently accommodate and process structurally similar amino acids such as valine, to avoid such errors it has two additional distinct tRNA(Ile)-dependent editing activities. One activity is designated as 'pretransfer' editing and involves the hydrolysis of activated Val-AMP. The other activity is designated 'posttransfer' editing and involves deacylation of mischarged Val-tRNA(Ile). The sequence is that of Isoleucine--tRNA ligase from Thermoanaerobacter pseudethanolicus (strain ATCC 33223 / 39E) (Clostridium thermohydrosulfuricum).